Consider the following 147-residue polypeptide: Peptide deformylase (147 aa).

2 residues coordinate Fe cation: Cys-88 and His-130. Glu-131 is an active-site residue. His-134 is a Fe cation binding site.

The protein belongs to the polypeptide deformylase family. Requires Fe(2+) as cofactor.

It carries out the reaction N-terminal N-formyl-L-methionyl-[peptide] + H2O = N-terminal L-methionyl-[peptide] + formate. Removes the formyl group from the N-terminal Met of newly synthesized proteins. Requires at least a dipeptide for an efficient rate of reaction. N-terminal L-methionine is a prerequisite for activity but the enzyme has broad specificity at other positions. The chain is Peptide deformylase from Alkaliphilus metalliredigens (strain QYMF).